Consider the following 293-residue polypeptide: Nitrogenase iron protein (293 aa).

Residue 10 to 17 (GKGGIGKS) participates in ATP binding. [4Fe-4S] cluster is bound at residue Cys-98. Arg-101 bears the ADP-ribosylarginine; by dinitrogenase reductase ADP-ribosyltransferase mark. Cys-133 serves as a coordination point for [4Fe-4S] cluster.

This sequence belongs to the NifH/BchL/ChlL family. In terms of assembly, homodimer. [4Fe-4S] cluster serves as cofactor. The reversible ADP-ribosylation of Arg-101 inactivates the nitrogenase reductase and regulates nitrogenase activity.

It carries out the reaction N2 + 8 reduced [2Fe-2S]-[ferredoxin] + 16 ATP + 16 H2O = H2 + 8 oxidized [2Fe-2S]-[ferredoxin] + 2 NH4(+) + 16 ADP + 16 phosphate + 6 H(+). Its function is as follows. The key enzymatic reactions in nitrogen fixation are catalyzed by the nitrogenase complex, which has 2 components: the iron protein and the molybdenum-iron protein. In Stutzerimonas stutzeri (strain A1501) (Pseudomonas stutzeri), this protein is Nitrogenase iron protein.